Consider the following 260-residue polypeptide: Deoxycytidine kinase (260 aa).

A phosphoserine; by CK1 mark is found at Ser-11 and Ser-15. Residue Gly-28–Thr-36 coordinates ATP. Glu-53 contacts substrate. Thr-72 carries the post-translational modification Phosphothreonine; by CK1. Position 74 is a phosphoserine; by CK1 (Ser-74). 2 residues coordinate substrate: Tyr-86 and Gln-97. Glu-127 acts as the Proton acceptor in catalysis. Positions 128 and 133 each coordinate substrate. Arg-188–Arg-192 provides a ligand contact to ATP. Glu-197 contacts substrate. Position 240–242 (Glu-240–Phe-242) interacts with ATP.

The protein belongs to the DCK/DGK family. Homodimer. Post-translationally, phosphorylated and activated in vitro upon phosphorylation at Ser-74 by CSNK1D/CK1.

It localises to the nucleus. The catalysed reaction is 2'-deoxycytidine + a ribonucleoside 5'-triphosphate = dCMP + a ribonucleoside 5'-diphosphate + H(+). It catalyses the reaction 2'-deoxyadenosine + ATP = dAMP + ADP + H(+). The enzyme catalyses 2'-deoxyguanosine + ATP = dGMP + ADP + H(+). In terms of biological role, phosphorylates the deoxyribonucleosides deoxycytidine, deoxyguanosine and deoxyadenosine. The protein is Deoxycytidine kinase (DCK) of Bos taurus (Bovine).